Reading from the N-terminus, the 61-residue chain is Metallothionein-1B (61 aa).

The tract at residues 1 to 29 (MDPNCSCVAGESCTCAGSCKCKQCRCASC) is beta. Residues C5, C7, C13, C15, C19, C21, C24, C26, C29, C33, C34, C36, C37, C41, C44, C48, C50, C57, C59, and C60 each contribute to the a divalent metal cation site. An alpha region spans residues 30–61 (KKSCCSCCPVGCAKCAQGCVCKGASDKCSCCA).

Belongs to the metallothionein superfamily. Type 1 family.

Functionally, metallothioneins have a high content of cysteine residues that bind various heavy metals; these proteins are transcriptionally regulated by both heavy metals and glucocorticoids. The sequence is that of Metallothionein-1B from Equus caballus (Horse).